The chain runs to 247 residues: 14-3-3 protein gamma (247 aa).

This sequence belongs to the 14-3-3 family. Homodimer, and heterodimer with other family members.

The protein resides in the cytoplasm. In terms of biological role, adapter protein implicated in the regulation of a large spectrum of both general and specialized signaling pathways. Binds to a large number of partners, usually by recognition of a phosphoserine or phosphothreonine motif. Binding generally results in the modulation of the activity of the binding partner. This Gallus gallus (Chicken) protein is 14-3-3 protein gamma (YWHAG).